We begin with the raw amino-acid sequence, 208 residues long: uncharacterized protein (208 aa).

The segment at 126-151 is disordered; sequence VGSGSGSDSSSGSTSSPNTVNNYNSD. Low complexity predominate over residues 131 to 141; sequence GSDSSSGSTSS.

This is an uncharacterized protein from Dictyostelium discoideum (Social amoeba).